We begin with the raw amino-acid sequence, 1393 residues long: DNA-directed RNA polymerase subunit beta'' (1393 aa).

The Zn(2+) site is built by Cys-220, Cys-291, Cys-298, and Cys-301.

It belongs to the RNA polymerase beta' chain family. RpoC2 subfamily. In terms of assembly, in plastids the minimal PEP RNA polymerase catalytic core is composed of four subunits: alpha, beta, beta', and beta''. When a (nuclear-encoded) sigma factor is associated with the core the holoenzyme is formed, which can initiate transcription. Requires Zn(2+) as cofactor.

Its subcellular location is the plastid. It is found in the chloroplast. The catalysed reaction is RNA(n) + a ribonucleoside 5'-triphosphate = RNA(n+1) + diphosphate. Its function is as follows. DNA-dependent RNA polymerase catalyzes the transcription of DNA into RNA using the four ribonucleoside triphosphates as substrates. In Gossypium hirsutum (Upland cotton), this protein is DNA-directed RNA polymerase subunit beta''.